Reading from the N-terminus, the 331-residue chain is Probable mannose-1-phosphate guanylyltransferase 3 (331 aa).

Residue Lys-3 coordinates diphosphate. 5 residues coordinate GDP-alpha-D-mannose: Gly-66, Asn-90, Asp-92, Gly-127, and Asn-154.

It belongs to the transferase hexapeptide repeat family.

It carries out the reaction alpha-D-mannose 1-phosphate + GTP + H(+) = GDP-alpha-D-mannose + diphosphate. The protein operates within nucleotide-sugar biosynthesis; GDP-alpha-D-mannose biosynthesis; GDP-alpha-D-mannose from alpha-D-mannose 1-phosphate (GTP route): step 1/1. Functionally, catalyzes a reaction of the Smirnoff-Wheeler pathway, the major route to ascorbate biosynthesis in plants. In Arabidopsis thaliana (Mouse-ear cress), this protein is Probable mannose-1-phosphate guanylyltransferase 3.